A 428-amino-acid polypeptide reads, in one-letter code: Cell number regulator 13 (428 aa).

The segment covering 233-280 (PEKETNVKAPEKKGSNYSESKGETAKSFDDDDDYPKKQNGDYPKKQKD) has biased composition (basic and acidic residues). The tract at residues 233–290 (PEKETNVKAPEKKGSNYSESKGETAKSFDDDDDYPKKQNGDYPKKQKDTCSTQRCSSQ) is disordered. Residues 281–290 (TCSTQRCSSQ) show a composition bias toward polar residues. The helical transmembrane segment at 354–370 (IMAYSLILSCCCYTCCV) threads the bilayer.

Expressed in roots, coleoptiles, leaves, stalks, apical meristems, immature ears, embryos, endosperm, pericarp, silks and tassel spikelets. Not detected in pollen.

The protein localises to the membrane. The polypeptide is Cell number regulator 13 (CNR13) (Zea mays (Maize)).